The sequence spans 184 residues: Ribosome-recycling factor (184 aa).

This sequence belongs to the RRF family.

Its subcellular location is the cytoplasm. Its function is as follows. Responsible for the release of ribosomes from messenger RNA at the termination of protein biosynthesis. May increase the efficiency of translation by recycling ribosomes from one round of translation to another. The polypeptide is Ribosome-recycling factor (Clostridium botulinum (strain ATCC 19397 / Type A)).